Here is a 270-residue protein sequence, read N- to C-terminus: Putative pyruvate, phosphate dikinase regulatory protein (270 aa).

ADP is bound at residue Gly-148 to Thr-155.

It belongs to the pyruvate, phosphate/water dikinase regulatory protein family. PDRP subfamily.

It catalyses the reaction N(tele)-phospho-L-histidyl/L-threonyl-[pyruvate, phosphate dikinase] + ADP = N(tele)-phospho-L-histidyl/O-phospho-L-threonyl-[pyruvate, phosphate dikinase] + AMP + H(+). The catalysed reaction is N(tele)-phospho-L-histidyl/O-phospho-L-threonyl-[pyruvate, phosphate dikinase] + phosphate + H(+) = N(tele)-phospho-L-histidyl/L-threonyl-[pyruvate, phosphate dikinase] + diphosphate. Functionally, bifunctional serine/threonine kinase and phosphorylase involved in the regulation of the pyruvate, phosphate dikinase (PPDK) by catalyzing its phosphorylation/dephosphorylation. This is Putative pyruvate, phosphate dikinase regulatory protein from Bacillus mycoides (strain KBAB4) (Bacillus weihenstephanensis).